Here is a 353-residue protein sequence, read N- to C-terminus: Photosystem II D2 protein (353 aa).

Residue T2 is modified to N-acetylthreonine. T2 carries the phosphothreonine modification. A helical transmembrane segment spans residues 41–61 (CAYFALGGWFTGTTFVTSWYT). Residue H118 participates in chlorophyll a binding. Residues 125-141 (GFMLRQFELARSVQLRP) traverse the membrane as a helical segment. Pheophytin a-binding residues include Q130 and N143. Residues 153–166 (VFVSVFLIYPLGQS) traverse the membrane as a helical segment. H198 lines the chlorophyll a pocket. Residues 208 to 228 (AALLCAIHGATVENTLFEDGD) traverse the membrane as a helical segment. H215 and F262 together coordinate a plastoquinone. A Fe cation-binding site is contributed by H215. Residue H269 participates in Fe cation binding. A helical membrane pass occupies residues 279-295 (GLWMSALGVVGLALNLR).

The protein belongs to the reaction center PufL/M/PsbA/D family. PSII is composed of 1 copy each of membrane proteins PsbA, PsbB, PsbC, PsbD, PsbE, PsbF, PsbH, PsbI, PsbJ, PsbK, PsbL, PsbM, PsbT, PsbX, PsbY, PsbZ, Psb30/Ycf12, at least 3 peripheral proteins of the oxygen-evolving complex and a large number of cofactors. It forms dimeric complexes. Requires The D1/D2 heterodimer binds P680, chlorophylls that are the primary electron donor of PSII, and subsequent electron acceptors. It shares a non-heme iron and each subunit binds pheophytin, quinone, additional chlorophylls, carotenoids and lipids. There is also a Cl(-1) ion associated with D1 and D2, which is required for oxygen evolution. The PSII complex binds additional chlorophylls, carotenoids and specific lipids. as cofactor.

It is found in the plastid. It localises to the chloroplast thylakoid membrane. It catalyses the reaction 2 a plastoquinone + 4 hnu + 2 H2O = 2 a plastoquinol + O2. Its function is as follows. Photosystem II (PSII) is a light-driven water:plastoquinone oxidoreductase that uses light energy to abstract electrons from H(2)O, generating O(2) and a proton gradient subsequently used for ATP formation. It consists of a core antenna complex that captures photons, and an electron transfer chain that converts photonic excitation into a charge separation. The D1/D2 (PsbA/PsbD) reaction center heterodimer binds P680, the primary electron donor of PSII as well as several subsequent electron acceptors. D2 is needed for assembly of a stable PSII complex. This chain is Photosystem II D2 protein, found in Coffea arabica (Arabian coffee).